The following is a 557-amino-acid chain: Urocanate hydratase (557 aa).

NAD(+) is bound by residues 53 to 54, Gln-131, 177 to 179, Glu-197, Arg-202, 243 to 244, 264 to 268, 274 to 275, and Tyr-323; these read GG, GMG, NA, QTSAH, and YL. Cys-411 is an active-site residue. Gly-493 is an NAD(+) binding site.

It belongs to the urocanase family. NAD(+) is required as a cofactor.

The protein resides in the cytoplasm. The enzyme catalyses 4-imidazolone-5-propanoate = trans-urocanate + H2O. The protein operates within amino-acid degradation; L-histidine degradation into L-glutamate; N-formimidoyl-L-glutamate from L-histidine: step 2/3. Functionally, catalyzes the conversion of urocanate to 4-imidazolone-5-propionate. The chain is Urocanate hydratase from Pseudomonas entomophila (strain L48).